A 622-amino-acid polypeptide reads, in one-letter code: Chaperone protein HtpG (622 aa).

The tract at residues 1 to 334 is a; substrate-binding; it reads MKGQETRGFQ…SNDLPLNVSR (334 aa). The interval 335–550 is b; that stretch reads EILQDSRITQ…ADEMSTQMAK (216 aa). The segment at 551–622 is c; the sequence is LFAAAGQQAP…IRRMNQLLTA (72 aa).

Belongs to the heat shock protein 90 family. Homodimer.

Its subcellular location is the cytoplasm. Molecular chaperone. Has ATPase activity. This is Chaperone protein HtpG from Yersinia pestis.